The following is a 730-amino-acid chain: Catalase-peroxidase 1 (730 aa).

The segment at 1 to 24 (MQEKGKCPVTGMTKHKTSGGTTNQ) is disordered. A cross-link (tryptophyl-tyrosyl-methioninium (Trp-Tyr) (with M-244)) is located at residues 95–218 (WHSAGTYRMG…LAAVQMGLIY (124 aa)). The active-site Proton acceptor is histidine 96. A cross-link (tryptophyl-tyrosyl-methioninium (Tyr-Met) (with W-95)) is located at residues 218–244 (YVNPEGPNGQPSALASGKDIRDTFARM). Heme b is bound at residue histidine 259.

It belongs to the peroxidase family. Peroxidase/catalase subfamily. Homodimer or homotetramer. Heme b is required as a cofactor. Formation of the three residue Trp-Tyr-Met cross-link is important for the catalase, but not the peroxidase activity of the enzyme.

It carries out the reaction H2O2 + AH2 = A + 2 H2O. The catalysed reaction is 2 H2O2 = O2 + 2 H2O. Its function is as follows. Bifunctional enzyme with both catalase and broad-spectrum peroxidase activity. The polypeptide is Catalase-peroxidase 1 (Alkaliphilus metalliredigens (strain QYMF)).